The chain runs to 254 residues: Hydroxyacylglutathione hydrolase (254 aa).

His-52, His-54, Asp-56, His-57, His-109, Asp-126, and His-164 together coordinate Zn(2+).

Belongs to the metallo-beta-lactamase superfamily. Glyoxalase II family. Monomer. It depends on Zn(2+) as a cofactor.

The catalysed reaction is an S-(2-hydroxyacyl)glutathione + H2O = a 2-hydroxy carboxylate + glutathione + H(+). Its pathway is secondary metabolite metabolism; methylglyoxal degradation; (R)-lactate from methylglyoxal: step 2/2. In terms of biological role, thiolesterase that catalyzes the hydrolysis of S-D-lactoyl-glutathione to form glutathione and D-lactic acid. This Stenotrophomonas maltophilia (strain R551-3) protein is Hydroxyacylglutathione hydrolase.